A 119-amino-acid chain; its full sequence is Aspartate 1-decarboxylase (119 aa).

Ser-25 (schiff-base intermediate with substrate; via pyruvic acid) is an active-site residue. Ser-25 is subject to Pyruvic acid (Ser). Thr-57 serves as a coordination point for substrate. Tyr-58 (proton donor) is an active-site residue. A substrate-binding site is contributed by 73-75; sequence GAA.

This sequence belongs to the PanD family. In terms of assembly, heterooctamer of four alpha and four beta subunits. Requires pyruvate as cofactor. In terms of processing, is synthesized initially as an inactive proenzyme, which is activated by self-cleavage at a specific serine bond to produce a beta-subunit with a hydroxyl group at its C-terminus and an alpha-subunit with a pyruvoyl group at its N-terminus.

It localises to the cytoplasm. The catalysed reaction is L-aspartate + H(+) = beta-alanine + CO2. The protein operates within cofactor biosynthesis; (R)-pantothenate biosynthesis; beta-alanine from L-aspartate: step 1/1. Its function is as follows. Catalyzes the pyruvoyl-dependent decarboxylation of aspartate to produce beta-alanine. The polypeptide is Aspartate 1-decarboxylase (Desulfotalea psychrophila (strain LSv54 / DSM 12343)).